A 490-amino-acid chain; its full sequence is MVSSITRIPGIPGDSPSEAEGLGKGIESSFGLNLIPLPANPLFGTDGIRGRVGELLSAPLALQVGFWTGIVLRNHATQIGPVILGQDSRNSSDMLAMALSAGLTAAGLEVWYLGLCPTPCIAYLTSISDAIGGVMISASHNPPEDNGIKVFGANGGKLPQILQAEIEAGLRGKISPIAKVSNCGRHYSRFELVGHYGDALKKPLNSTLNLQGMKIVLDLAWGAAVGLAPSVFTEMGAEVICLHNEADGDRINVNCGSTHLDILAATVQEHNADIGFAFDGDADRVLAVDNTGRQVNGDYILYLWGRHLQKNQQLPDNLIVSTVMANLGFEKAWQQIGGKLIRTAVGDQYVQAEMQRTGGMLGGEQSGHILCRHYAVTGDGLLTALHMAALVKEAGVSLAELVDQSFQTYPQILRNVRVTDRDRRLGWQDCEPVQQAIALAEAAMGDSGRILVRASGTEPVIRVMVEAANAELTNYWTNELVSKVQQHLMD.

Serine 139 (phosphoserine intermediate) is an active-site residue. Residues serine 139, aspartate 279, aspartate 281, and aspartate 283 each contribute to the Mg(2+) site. Serine 139 is subject to Phosphoserine.

The protein belongs to the phosphohexose mutase family. The cofactor is Mg(2+). Activated by phosphorylation.

It catalyses the reaction alpha-D-glucosamine 1-phosphate = D-glucosamine 6-phosphate. Functionally, catalyzes the conversion of glucosamine-6-phosphate to glucosamine-1-phosphate. This is Phosphoglucosamine mutase from Nostoc punctiforme (strain ATCC 29133 / PCC 73102).